The primary structure comprises 357 residues: Prostaglandin D2 receptor (357 aa).

The Extracellular portion of the chain corresponds to 1–20 (MNESYRCQTSTWVERGSSAT). The N-linked (GlcNAc...) asparagine glycan is linked to Asn2. The chain crosses the membrane as a helical span at residues 21–41 (MGAVLFGAGLLGNLLALVLLA). The Cytoplasmic portion of the chain corresponds to 42–58 (RSGLGSCRPGPLHPPPS). A helical membrane pass occupies residues 59-79 (VFYVLVCGLTVTDLLGKCLIS). At 80 to 106 (PMVLAAYAQNQSLKELLPASGNQLCET) the chain is on the extracellular side. N-linked (GlcNAc...) asparagine glycosylation is present at Asn89. A disulfide bond links Cys104 and Cys182. The chain crosses the membrane as a helical span at residues 107–127 (FAFLMSFFGLASTLQLLAMAV). Residues 128–149 (ECWLSLGHPFFYQRHVTLRRGV) are Cytoplasmic-facing. Residues 150–170 (LVAPVVAAFCLAFCALPFAGF) traverse the membrane as a helical segment. Residues 171–194 (GKFVQYCPGTWCFIQMIHKERSFS) are Extracellular-facing. A helical transmembrane segment spans residues 195–215 (VIGFSVLYSSLMALLVLATVV). The Cytoplasmic portion of the chain corresponds to 216-261 (CNLGAMYNLYDMHRRQRHYPHRCSRDRAQSGSDYRHGSLHPLEELD). The chain crosses the membrane as a helical span at residues 262–282 (HFVLLALMTVLFTMCSLPLIY). The Extracellular portion of the chain corresponds to 283–306 (RAYYGAFKLENKAEGDSEDLQALR). A helical transmembrane segment spans residues 307–327 (FLSVISIVDPWIFIIFRTSVF). Residues 328–357 (RMLFHKVFTRPLIYRNWSSHSQQSNVESTL) are Cytoplasmic-facing.

It belongs to the G-protein coupled receptor 1 family. In terms of tissue distribution, most abundantly expressed in the ileum, followed by lung, stomach and uterus.

Its subcellular location is the cell membrane. Functionally, receptor for prostaglandin D2 (PGD2). The activity of this receptor is mainly mediated by G(s) proteins that stimulate adenylate cyclase, resulting in an elevation of intracellular cAMP. A mobilization of calcium is also observed, but without formation of inositol 1,4,5-trisphosphate. Involved in PLA2G3-dependent maturation of mast cells. PLA2G3 is secreted by immature mast cells and acts on nearby fibroblasts upstream to PTDGS to synthesize PGD2, which in turn promotes mast cell maturation and degranulation via PTGDR. In Mus musculus (Mouse), this protein is Prostaglandin D2 receptor (Ptgdr).